Consider the following 314-residue polypeptide: Malate dehydrogenase (314 aa).

NAD(+) is bound by residues 11–16 (GSGNIG) and Asp35. Positions 84 and 90 each coordinate substrate. NAD(+) contacts are provided by residues Asn97 and 120 to 122 (ITN). Substrate contacts are provided by Asn122 and Arg153. The active-site Proton acceptor is His177.

Belongs to the LDH/MDH superfamily. MDH type 3 family.

The enzyme catalyses (S)-malate + NAD(+) = oxaloacetate + NADH + H(+). Catalyzes the reversible oxidation of malate to oxaloacetate. The sequence is that of Malate dehydrogenase from Rickettsia africae (strain ESF-5).